The following is a 244-amino-acid chain: MSETSRIDGRRLDQLRDVRIERGWLSQAEGSVLVSFGRTTVLCNASVTEGVPRWRKGSGLGWVTAEYEMLPRATNERSGRESRKGKVGGRTHEISRLVGRSLRAVVDDKALGENTIILDCDVLQADGGTRTASITGAYVALIDAVNWLRGRGGLVSEPIIGSVQAISVGVVDGIPMLDLAYKEDSRADTDMNVVMSGNGDFVEIQGTAEGTPFNRNLLNELLDLAAGGCATLKQAQSEALGVTL.

Residues arginine 90 and 128–130 (GTR) contribute to the phosphate site.

It belongs to the RNase PH family. As to quaternary structure, homohexameric ring arranged as a trimer of dimers.

It catalyses the reaction tRNA(n+1) + phosphate = tRNA(n) + a ribonucleoside 5'-diphosphate. In terms of biological role, phosphorolytic 3'-5' exoribonuclease that plays an important role in tRNA 3'-end maturation. Removes nucleotide residues following the 3'-CCA terminus of tRNAs; can also add nucleotides to the ends of RNA molecules by using nucleoside diphosphates as substrates, but this may not be physiologically important. Probably plays a role in initiation of 16S rRNA degradation (leading to ribosome degradation) during starvation. This Cutibacterium acnes (strain DSM 16379 / KPA171202) (Propionibacterium acnes) protein is Ribonuclease PH.